Consider the following 210-residue polypeptide: Pyridoxine/pyridoxamine 5'-phosphate oxidase (210 aa).

Substrate is bound by residues 7–10 (REDY) and Lys-65. Residues 60 to 65 (RMVLLK), 75 to 76 (FT), Arg-81, Lys-82, and Gln-104 each bind FMN. Positions 122, 126, and 130 each coordinate substrate. Residues 139-140 (QS) and Trp-183 each bind FMN. Residue 189–191 (RLH) participates in substrate binding. Arg-193 contacts FMN.

It belongs to the pyridoxamine 5'-phosphate oxidase family. In terms of assembly, homodimer. FMN is required as a cofactor.

It carries out the reaction pyridoxamine 5'-phosphate + O2 + H2O = pyridoxal 5'-phosphate + H2O2 + NH4(+). It catalyses the reaction pyridoxine 5'-phosphate + O2 = pyridoxal 5'-phosphate + H2O2. It functions in the pathway cofactor metabolism; pyridoxal 5'-phosphate salvage; pyridoxal 5'-phosphate from pyridoxamine 5'-phosphate: step 1/1. The protein operates within cofactor metabolism; pyridoxal 5'-phosphate salvage; pyridoxal 5'-phosphate from pyridoxine 5'-phosphate: step 1/1. Functionally, catalyzes the oxidation of either pyridoxine 5'-phosphate (PNP) or pyridoxamine 5'-phosphate (PMP) into pyridoxal 5'-phosphate (PLP). In Neisseria meningitidis serogroup A / serotype 4A (strain DSM 15465 / Z2491), this protein is Pyridoxine/pyridoxamine 5'-phosphate oxidase.